The chain runs to 51 residues: MSRNKELGRKIRLMKKIKQNRRVPGWVMMRTARKVTQNPLRRNWRRGSLKI.

It belongs to the eukaryotic ribosomal protein eL39 family.

The polypeptide is Large ribosomal subunit protein eL39 (rpl39e) (Thermoplasma acidophilum (strain ATCC 25905 / DSM 1728 / JCM 9062 / NBRC 15155 / AMRC-C165)).